Consider the following 112-residue polypeptide: Tyrosine-protein phosphatase 17 (112 aa).

A Tyrosine-protein phosphatase domain is found at Trp-1–Val-112. Position 82 (Asp-82) interacts with substrate.

This sequence belongs to the protein-tyrosine phosphatase family.

It catalyses the reaction O-phospho-L-tyrosyl-[protein] + H2O = L-tyrosyl-[protein] + phosphate. In Styela plicata (Wrinkled sea squirt), this protein is Tyrosine-protein phosphatase 17 (STY-17).